Here is a 184-residue protein sequence, read N- to C-terminus: Ribosome-recycling factor (184 aa).

The protein belongs to the RRF family.

It is found in the cytoplasm. In terms of biological role, responsible for the release of ribosomes from messenger RNA at the termination of protein biosynthesis. May increase the efficiency of translation by recycling ribosomes from one round of translation to another. The protein is Ribosome-recycling factor of Fervidobacterium nodosum (strain ATCC 35602 / DSM 5306 / Rt17-B1).